The following is a 183-amino-acid chain: Adenine phosphoribosyltransferase 3 (183 aa).

This sequence belongs to the purine/pyrimidine phosphoribosyltransferase family. Homodimer.

The protein localises to the cytoplasm. It carries out the reaction AMP + diphosphate = 5-phospho-alpha-D-ribose 1-diphosphate + adenine. The protein operates within purine metabolism; AMP biosynthesis via salvage pathway; AMP from adenine: step 1/1. Functionally, catalyzes a salvage reaction resulting in the formation of AMP, that is energically less costly than de novo synthesis. May contribute to the recycling of adenine into adenylate nucleotides and the inactivation of cytokinins by phosphoribosylation. Possesses low activity toward adenine and cytokinins. The polypeptide is Adenine phosphoribosyltransferase 3 (APT3) (Arabidopsis thaliana (Mouse-ear cress)).